A 158-amino-acid polypeptide reads, in one-letter code: NAD(P)H-quinone oxidoreductase subunit J, chloroplastic (158 aa).

It belongs to the complex I 30 kDa subunit family. In terms of assembly, NDH is composed of at least 16 different subunits, 5 of which are encoded in the nucleus.

It localises to the plastid. It is found in the chloroplast thylakoid membrane. The catalysed reaction is a plastoquinone + NADH + (n+1) H(+)(in) = a plastoquinol + NAD(+) + n H(+)(out). It carries out the reaction a plastoquinone + NADPH + (n+1) H(+)(in) = a plastoquinol + NADP(+) + n H(+)(out). Its function is as follows. NDH shuttles electrons from NAD(P)H:plastoquinone, via FMN and iron-sulfur (Fe-S) centers, to quinones in the photosynthetic chain and possibly in a chloroplast respiratory chain. The immediate electron acceptor for the enzyme in this species is believed to be plastoquinone. Couples the redox reaction to proton translocation, and thus conserves the redox energy in a proton gradient. The chain is NAD(P)H-quinone oxidoreductase subunit J, chloroplastic from Aethionema cordifolium (Lebanon stonecress).